We begin with the raw amino-acid sequence, 207 residues long: Ribosomal RNA large subunit methyltransferase E (207 aa).

Gly-56, Trp-58, Asp-76, Asp-94, and Asp-116 together coordinate S-adenosyl-L-methionine. The Proton acceptor role is filled by Lys-156.

This sequence belongs to the class I-like SAM-binding methyltransferase superfamily. RNA methyltransferase RlmE family.

The protein resides in the cytoplasm. The enzyme catalyses uridine(2552) in 23S rRNA + S-adenosyl-L-methionine = 2'-O-methyluridine(2552) in 23S rRNA + S-adenosyl-L-homocysteine + H(+). Specifically methylates the uridine in position 2552 of 23S rRNA at the 2'-O position of the ribose in the fully assembled 50S ribosomal subunit. The polypeptide is Ribosomal RNA large subunit methyltransferase E (Desulfatibacillum aliphaticivorans).